The following is a 2694-amino-acid chain: Neurobeachin-like protein 1 (2694 aa).

3 disordered regions span residues 1289–1314 (VLMKDNDKNMSTEDTKKNSDEKTDEE), 1330–1350 (SLEDRHSLDSNTPLFPEDSSV), and 1381–1411 (CEMSDSGSQVPDSLPSTPSPVESTKSFSVHS). A compositionally biased stretch (basic and acidic residues) spans 1290 to 1314 (LMKDNDKNMSTEDTKKNSDEKTDEE). Polar residues predominate over residues 1383–1409 (MSDSGSQVPDSLPSTPSPVESTKSFSV). In terms of domain architecture, BEACH-type PH spans 1883 to 1980 (DQKEKLVLME…VRNKIYSRLL (98 aa)). The BEACH domain occupies 1992–2284 (RSPQELFKAS…QLLKEPHPPR (293 aa)). WD repeat units lie at residues 2439–2478 (RHMDIVTCLATDYCGIHLISGSRDTTCMIWQITQQGGVPV) and 2490–2531 (GHTN…RTLR).

It belongs to the WD repeat neurobeachin family. As to expression, highly expressed in brain, kidney, prostate and testis. Weakly expressed in ovary, small intestine, colon and peripheral blood leukocytes. May be correlative to several tumors, such as ovary serous adenocarcinoma and metastasis mammary gland carcinoma breast.

This chain is Neurobeachin-like protein 1 (NBEAL1), found in Homo sapiens (Human).